We begin with the raw amino-acid sequence, 467 residues long: Fumarate hydratase class II (467 aa).

Substrate-binding positions include Ser-98 to Thr-100, Arg-126, His-129 to Asp-132, Ser-139 to Asn-141, and Thr-187. The active-site Proton donor/acceptor is the His-188. Residue Ser-318 is part of the active site. Substrate-binding positions include Ser-319 and Lys-324–Asn-326.

This sequence belongs to the class-II fumarase/aspartase family. Fumarase subfamily. In terms of assembly, homotetramer.

It is found in the cytoplasm. It carries out the reaction (S)-malate = fumarate + H2O. Its pathway is carbohydrate metabolism; tricarboxylic acid cycle; (S)-malate from fumarate: step 1/1. Functionally, involved in the TCA cycle. Catalyzes the stereospecific interconversion of fumarate to L-malate. The sequence is that of Fumarate hydratase class II from Escherichia coli O157:H7.